We begin with the raw amino-acid sequence, 622 residues long: Auxin response factor 11 (622 aa).

The segment at residues Phe-145–Ala-247 is a DNA-binding region (TF-B3). Disordered stretches follow at residues Ser-358–Ile-398 and Ser-483–Arg-513. Polar residues-rich tracts occupy residues Ser-376 to Ser-387 and Ser-483 to Arg-511. One can recognise a PB1 domain in the interval Arg-511–Glu-594.

This sequence belongs to the ARF family. In terms of assembly, homodimers and heterodimers.

It is found in the nucleus. Auxin response factors (ARFs) are transcriptional factors that bind specifically to the DNA sequence 5'-TGTCTC-3' found in the auxin-responsive promoter elements (AuxREs). Could act as transcriptional activator or repressor. Formation of heterodimers with Aux/IAA proteins may alter their ability to modulate early auxin response genes expression. The polypeptide is Auxin response factor 11 (ARF11) (Arabidopsis thaliana (Mouse-ear cress)).